Consider the following 197-residue polypeptide: dITP/XTP pyrophosphatase (197 aa).

A substrate-binding site is contributed by threonine 8–lysine 13. 2 residues coordinate Mg(2+): glutamate 40 and aspartate 69. Aspartate 69 (proton acceptor) is an active-site residue. Substrate is bound by residues serine 70, phenylalanine 154–aspartate 157, lysine 177, and histidine 182–arginine 183.

Belongs to the HAM1 NTPase family. As to quaternary structure, homodimer. It depends on Mg(2+) as a cofactor.

It carries out the reaction XTP + H2O = XMP + diphosphate + H(+). The enzyme catalyses dITP + H2O = dIMP + diphosphate + H(+). It catalyses the reaction ITP + H2O = IMP + diphosphate + H(+). Functionally, pyrophosphatase that catalyzes the hydrolysis of nucleoside triphosphates to their monophosphate derivatives, with a high preference for the non-canonical purine nucleotides XTP (xanthosine triphosphate), dITP (deoxyinosine triphosphate) and ITP. Seems to function as a house-cleaning enzyme that removes non-canonical purine nucleotides from the nucleotide pool, thus preventing their incorporation into DNA/RNA and avoiding chromosomal lesions. This chain is dITP/XTP pyrophosphatase (rdgB), found in Salmonella typhi.